The following is a 346-amino-acid chain: uncharacterized protein (346 aa).

A helical membrane pass occupies residues 7-27 (AMVILLIICGTYVLFIQYGSV). The interval 29–48 (EKKSNDSEPQVSNEEAQSGK) is disordered. Polar residues predominate over residues 35 to 44 (SEPQVSNEEA). The SCP domain maps to 231–342 (LDLTNVIRVK…VDRKYYTQNF (112 aa)).

It localises to the cell membrane. This is an uncharacterized protein from Bacillus subtilis (strain 168).